We begin with the raw amino-acid sequence, 169 residues long: Cell division inhibitor SulA (169 aa).

The span at 1-15 shows a compositional bias: polar residues; sequence MFTSAHANRSAQASA. The disordered stretch occupies residues 1–22; sequence MFTSAHANRSAQASASAGHYAH. The segment at 106–112 is ftsZ binding; that stretch reads ALRTGNY. The segment at 162–169 is lon protease binding; the sequence is KIHSNLYH.

The protein belongs to the SulA family. In terms of assembly, interacts with FtsZ. Post-translationally, is rapidly cleaved and degraded by the Lon protease once DNA damage is repaired.

Its function is as follows. Component of the SOS system and an inhibitor of cell division. Accumulation of SulA causes rapid cessation of cell division and the appearance of long, non-septate filaments. In the presence of GTP, binds a polymerization-competent form of FtsZ in a 1:1 ratio, thus inhibiting FtsZ polymerization and therefore preventing it from participating in the assembly of the Z ring. This mechanism prevents the premature segregation of damaged DNA to daughter cells during cell division. This is Cell division inhibitor SulA from Klebsiella pneumoniae (strain 342).